The following is a 489-amino-acid chain: Betaine aldehyde dehydrogenase (489 aa).

K(+) contacts are provided by threonine 26 and aspartate 93. 150-152 lines the NAD(+) pocket; sequence GAW. Lysine 162 serves as the catalytic Charge relay system. Residue 176–179 participates in NAD(+) binding; that stretch reads KPSE. Valine 180 contacts K(+). 229–232 contributes to the NAD(+) binding site; the sequence is GVET. Residue leucine 245 participates in K(+) binding. Glutamate 251 serves as the catalytic Proton acceptor. The NAD(+) site is built by glycine 253, cysteine 285, and glutamate 386. Cysteine 285 (nucleophile) is an active-site residue. Cysteine sulfenic acid (-SOH) is present on cysteine 285. K(+) is bound by residues lysine 456 and glycine 459. Glutamate 463 serves as the catalytic Charge relay system.

This sequence belongs to the aldehyde dehydrogenase family. In terms of assembly, dimer of dimers. K(+) is required as a cofactor.

It catalyses the reaction betaine aldehyde + NAD(+) + H2O = glycine betaine + NADH + 2 H(+). Its pathway is amine and polyamine biosynthesis; betaine biosynthesis via choline pathway; betaine from betaine aldehyde: step 1/1. In terms of biological role, involved in the biosynthesis of the osmoprotectant glycine betaine. Catalyzes the irreversible oxidation of betaine aldehyde to the corresponding acid. The protein is Betaine aldehyde dehydrogenase of Burkholderia orbicola (strain AU 1054).